The following is a 206-amino-acid chain: Small ribosomal subunit protein uS4c (206 aa).

The 69-residue stretch at M93 to K161 folds into the S4 RNA-binding domain.

Belongs to the universal ribosomal protein uS4 family. In terms of assembly, part of the 30S ribosomal subunit. Contacts protein S5. The interaction surface between S4 and S5 is involved in control of translational fidelity.

Its subcellular location is the plastid. One of the primary rRNA binding proteins, it binds directly to 16S rRNA where it nucleates assembly of the body of the 30S subunit. Its function is as follows. With S5 and S12 plays an important role in translational accuracy. In Euglena longa (Euglenophycean alga), this protein is Small ribosomal subunit protein uS4c (rps4).